The sequence spans 94 residues: Large ribosomal subunit protein bL25 (94 aa).

Belongs to the bacterial ribosomal protein bL25 family. As to quaternary structure, part of the 50S ribosomal subunit; part of the 5S rRNA/L5/L18/L25 subcomplex. Contacts the 5S rRNA. Binds to the 5S rRNA independently of L5 and L18.

Functionally, this is one of the proteins that binds to the 5S RNA in the ribosome where it forms part of the central protuberance. This is Large ribosomal subunit protein bL25 from Proteus mirabilis (strain HI4320).